The primary structure comprises 259 residues: MTTAARPTFDPARGGSGRGEKDLSALSKQYSSRDLPGHTKLKYRETGQGTSDENRNRDFRKELEEREREARSGTGATSSSSGKALPSIVRKAIEANNAGGGSSAAKRSKPDAGQQQAQQAAQQQAANMDADEPLDNDSSDSDSDSDDDDAALLAELQKIKQERLQETARRESEKKQEDERIRMENILSGNPLMNYEPGTAASAAGRASGLGGDLKIKRRWDDDVVFKNCARSAPDKKTHFVNDALRSDFHKKFMDKYIK.

The segment at methionine 1–arginine 182 is disordered. Basic and acidic residues predominate over residues aspartate 52–arginine 71. Low complexity-rich tracts occupy residues serine 72–glycine 82 and glutamine 114–alanine 126. A compositionally biased stretch (acidic residues) spans aspartate 129–alanine 150. Residues alanine 150–arginine 182 adopt a coiled-coil conformation. The segment covering glutamine 157–arginine 182 has biased composition (basic and acidic residues).

The protein belongs to the CWC15 family.

Functionally, involved in pre-mRNA splicing. This Drosophila melanogaster (Fruit fly) protein is Protein CWC15 homolog (c12.1).